Reading from the N-terminus, the 126-residue chain is uncharacterized protein (126 aa).

A VOC domain is found at 4-126 (RIDHTGIMVR…DGEWIEFFQR (123 aa)). A divalent metal cation is bound by residues His-7, Glu-42, His-74, and Glu-122.

This sequence belongs to the glyoxalase I family.

This is an uncharacterized protein from Bacillus subtilis (strain 168).